Here is a 518-residue protein sequence, read N- to C-terminus: Putative N-acetylmuramoyl-L-alanine amidase YrvJ (518 aa).

The N-terminal stretch at 1–27 (MNKKYFVLIVCIIFTSALFPTFSSVTA) is a signal peptide. 4 consecutive SH3b domains span residues 29–91 (QGEA…ITKE), 102–164 (SDTV…TSGG), 181–243 (STTG…LTSS), and 258–320 (AKKA…VQTS). Disordered stretches follow at residues 94–121 (ASTS…PGTS) and 160–186 (VTSG…TGTV). Composition is skewed to low complexity over residues 95-108 (STSS…VTST) and 160-169 (VTSGGSSSAS). The tract at residues 322–352 (SAEEAGEPPVSDSPSGNGSLNNKTIIVDPGH) is disordered. Residues 333-345 (DSPSGNGSLNNKT) are compositionally biased toward polar residues. Residues 346 to 514 (IIVDPGHGGK…VTDGIESGLE (169 aa)) enclose the MurNAc-LAA domain.

Belongs to the N-acetylmuramoyl-L-alanine amidase 3 family.

It is found in the secreted. Its subcellular location is the cell wall. It catalyses the reaction Hydrolyzes the link between N-acetylmuramoyl residues and L-amino acid residues in certain cell-wall glycopeptides.. Probably involved in cell-wall metabolism. This Bacillus subtilis (strain 168) protein is Putative N-acetylmuramoyl-L-alanine amidase YrvJ (yrvJ).